The chain runs to 249 residues: 3-deoxy-D-manno-octulosonic acid kinase (249 aa).

The active site involves Asp175.

Belongs to the protein kinase superfamily. KdkA/RfaP family.

It is found in the cell inner membrane. It catalyses the reaction an alpha-Kdo-(2-&gt;6)-lipid IVA + ATP = a 4-O-phospho-alpha-Kdo-(2-&gt;6)-lipid IVA + ADP + H(+). It participates in bacterial outer membrane biogenesis; LPS core biosynthesis. Functionally, catalyzes the ATP-dependent phosphorylation of the 3-deoxy-D-manno-octulosonic acid (Kdo) residue in Kdo-lipid IV(A) at the 4-OH position. The chain is 3-deoxy-D-manno-octulosonic acid kinase from Xanthomonas axonopodis pv. citri (strain 306).